Here is a 1201-residue protein sequence, read N- to C-terminus: Period circadian protein homolog 3 (1201 aa).

Positions 1 to 50 (MPRGEAPGPGRRGAKDEALGEESGERWSPEFHLQRKLADSSHSEQQDRNR) are disordered. Residues 13–50 (GAKDEALGEESGERWSPEFHLQRKLADSSHSEQQDRNR) show a composition bias toward basic and acidic residues. The short motif at 55–64 (LIMVVQEMKK) is the Nuclear export signal 1 element. PAS domains are found at residues 121 to 188 (IASE…RAQL) and 262 to 328 (YEAP…KVLK). A PAC domain is found at 337-380 (HSPIRFCTQNGDYIILDSSWSSFVNPWSRKISFIIGRHKVRTSP). The Nuclear export signal 3 signature appears at 403-412 (LQEQIYKLLL). The segment at 555-760 (LKRKCISCTN…SSSNTGSGPR (206 aa)) is CSNK1E binding domain. Disordered regions lie at residues 717–788 (YSYF…FPPA) and 881–923 (PSMS…RSSS). A compositionally biased stretch (polar residues) spans 721–731 (QGDSTSKQTRS). Residues 729–745 (TRSAGCRKGKHKRKKLP) carry the Nuclear localization signal motif. Residues 733 to 743 (GCRKGKHKRKK) show a composition bias toward basic residues. 2 stretches are compositionally biased toward low complexity: residues 767–783 (AQPCCPSAASSPHTSSP) and 881–890 (PSMSSAMSPT). Residues 900–911 (QRREEEKWEAQS) are compositionally biased toward basic and acidic residues. A Phosphoserine modification is found at serine 919. A Nuclear export signal 2 motif is present at residues 925–932 (LQLNLLQE). Residues 952 to 1067 (TEYCVTGNNG…GSAASGSSDS (116 aa)) form a disordered region. Composition is skewed to polar residues over residues 957–976 (TGNNGSESSPATTGALSTGS), 983–994 (SHPTASALSTGS), 1001–1012 (SHPTASALSTGS), and 1035–1050 (TPSHPTATVLSTGSPP). Repeat copies occupy residues 965–982 (SPATTGALSTGSPPRENP), 983–1000 (SHPTASALSTGSPPMKNP), 1001–1018 (SHPTASALSTGSPPMKNP), 1019–1036 (SHPTASTLSMGLPPSRTP), and 1037–1054 (SHPTATVLSTGSPPSESP). The tract at residues 965-1054 (SPATTGALST…STGSPPSESP (90 aa)) is 5 X 18 AA tandem repeats of S-[HP]-[AP]-T-[AT]-[GST]-[ATV]-L-S-[MT]-G-[LS]-P-P-[MRS]-[EKR]-[NST]-P. Serine 994 carries the post-translational modification Phosphoserine. Residue serine 1053 is modified to Phosphoserine. Positions 1053 to 1067 (SPSRTGSAASGSSDS) are enriched in low complexity. Positions 1123–1201 (ERVKEVVLKE…CGQVLVEDSC (79 aa)) are CRY binding domain.

Homodimer. Component of the circadian core oscillator, which includes the CRY proteins, CLOCK or NPAS2, BMAL1 or BMAL2, CSNK1D and/or CSNK1E, TIMELESS and the PER proteins. Interacts directly with PER1, PER2, CRY1, CRY2, and TIMELESS; interaction with CRY1 and CRY2 is weak and not rhythmic. Interacts with FBXW11 and BTRC. Post-translationally, phosphorylation by CSNK1E is weak and appears to require association with PER1 and translocation to the nucleus. Ubiquitinated.

Its subcellular location is the cytoplasm. The protein localises to the nucleus. In terms of biological role, originally described as a core component of the circadian clock. The circadian clock, an internal time-keeping system, regulates various physiological processes through the generation of approximately 24 hour circadian rhythms in gene expression, which are translated into rhythms in metabolism and behavior. It is derived from the Latin roots 'circa' (about) and 'diem' (day) and acts as an important regulator of a wide array of physiological functions including metabolism, sleep, body temperature, blood pressure, endocrine, immune, cardiovascular, and renal function. Consists of two major components: the central clock, residing in the suprachiasmatic nucleus (SCN) of the brain, and the peripheral clocks that are present in nearly every tissue and organ system. Both the central and peripheral clocks can be reset by environmental cues, also known as Zeitgebers (German for 'timegivers'). The predominant Zeitgeber for the central clock is light, which is sensed by retina and signals directly to the SCN. The central clock entrains the peripheral clocks through neuronal and hormonal signals, body temperature and feeding-related cues, aligning all clocks with the external light/dark cycle. Circadian rhythms allow an organism to achieve temporal homeostasis with its environment at the molecular level by regulating gene expression to create a peak of protein expression once every 24 hours to control when a particular physiological process is most active with respect to the solar day. Transcription and translation of core clock components (CLOCK, NPAS2, BMAL1, BMAL2, PER1, PER2, PER3, CRY1 and CRY2) plays a critical role in rhythm generation, whereas delays imposed by post-translational modifications (PTMs) are important for determining the period (tau) of the rhythms (tau refers to the period of a rhythm and is the length, in time, of one complete cycle). A diurnal rhythm is synchronized with the day/night cycle, while the ultradian and infradian rhythms have a period shorter and longer than 24 hours, respectively. Disruptions in the circadian rhythms contribute to the pathology of cardiovascular diseases, cancer, metabolic syndromes and aging. A transcription/translation feedback loop (TTFL) forms the core of the molecular circadian clock mechanism. Transcription factors, CLOCK or NPAS2 and BMAL1 or BMAL2, form the positive limb of the feedback loop, act in the form of a heterodimer and activate the transcription of core clock genes and clock-controlled genes (involved in key metabolic processes), harboring E-box elements (5'-CACGTG-3') within their promoters. The core clock genes: PER1/2/3 and CRY1/2 which are transcriptional repressors form the negative limb of the feedback loop and interact with the CLOCK|NPAS2-BMAL1|BMAL2 heterodimer inhibiting its activity and thereby negatively regulating their own expression. This heterodimer also activates nuclear receptors NR1D1, NR1D2, RORA, RORB and RORG, which form a second feedback loop and which activate and repress BMAL1 transcription, respectively. Has a redundant role with the other PER proteins PER1 and PER2 and is not essential for the circadian rhythms maintenance. In contrast, plays an important role in sleep-wake timing and sleep homeostasis probably through the transcriptional regulation of sleep homeostasis-related genes, without influencing circadian parameters. Can bind heme. This Homo sapiens (Human) protein is Period circadian protein homolog 3 (PER3).